The sequence spans 312 residues: MTRPIILDCDPGHDDAIAIILALSSDAFSPLAVTTSAGNQTPDKTLNNALRILTLLGRSDIPVAGGAVKPLARELIIADNVHGETGLDGPVLPDPSFAPQAMTAVELMALKIKQSQAPVTLVPTGPLTNIALLLATHPELHSNIEQIVLMGGAAGVGNWTPAAEFNIFVDPEAADMVFKAGIPITMCGLDVTHQAQVMDEDIARIRAIENPIAQCVADLLDFFILYHRDPKWGFTGAPLHDPCTIAWLLKPELFTAQQAWVGIETKGEHTQGMTVVDRYGLTGNQANATVLFDIDRAGFIDLLAQSLETYSR.

The active site involves His240.

It belongs to the IUNH family. RihA subfamily.

Hydrolyzes cytidine or uridine to ribose and cytosine or uracil, respectively. In Shewanella woodyi (strain ATCC 51908 / MS32), this protein is Pyrimidine-specific ribonucleoside hydrolase RihA.